Consider the following 289-residue polypeptide: Acetyl-coenzyme A carboxylase carboxyl transferase subunit beta (289 aa).

Residues 28–289 (VMTKCPECKK…QGGGMAVWQS (262 aa)) enclose the CoA carboxyltransferase N-terminal domain. The Zn(2+) site is built by Cys32, Cys35, Cys51, and Cys54. The C4-type zinc-finger motif lies at 32–54 (CPECKKIMYTKELLKNLKVCVNC).

Belongs to the AccD/PCCB family. As to quaternary structure, acetyl-CoA carboxylase is a heterohexamer composed of biotin carboxyl carrier protein (AccB), biotin carboxylase (AccC) and two subunits each of ACCase subunit alpha (AccA) and ACCase subunit beta (AccD). The cofactor is Zn(2+).

It localises to the cytoplasm. It carries out the reaction N(6)-carboxybiotinyl-L-lysyl-[protein] + acetyl-CoA = N(6)-biotinyl-L-lysyl-[protein] + malonyl-CoA. It participates in lipid metabolism; malonyl-CoA biosynthesis; malonyl-CoA from acetyl-CoA: step 1/1. In terms of biological role, component of the acetyl coenzyme A carboxylase (ACC) complex. Biotin carboxylase (BC) catalyzes the carboxylation of biotin on its carrier protein (BCCP) and then the CO(2) group is transferred by the transcarboxylase to acetyl-CoA to form malonyl-CoA. This is Acetyl-coenzyme A carboxylase carboxyl transferase subunit beta from Bacillus cereus (strain G9842).